The sequence spans 1482 residues: MQRSPLEKASVFSKLFFSWTRPILRKGYRQRLELSDIYQIPSADSADNLSEKLEREWDRELASKKNPKLINALRRCFFWRFMFYGILLYLGEVTKAVQPLLLGRIIASYDPDNKVERSIAIYLGIGLCLLFIVRTLLLHPAIFGLHHIGMQMRIAMFSLIYKKILKLSSRVLDKISIGQLVSLLSNNLNKFDEGLALAHFVWIAPLQVTLLMGLLWELLQASAFCGLGFLIVLALVQAGLGRMMMKYRDQRAGKINERLVITSEMIENIQSVKAYCWEEAMEKMIENLRQTELKLTRKAAYVRYFNSSAFFFSGFFVVFLSVLPYALIKGIILRKIFTTISFCIVLRMAVTRQFPWAVQTWYDSLGAINKIQDFLQKQEYKTLEYNLTTTEVVMENVTAFWEEGIGELFEKAKQNNDNRKISNGDNSLFFSNLALLGAPVLKDINFKIERGQLLAVAGSTGAGKTSLLMMIMGELEPSEGKIKHSGRISFCSQFSWIMPGTIKENIIFGVSYDEYRYRSVIKACQLEEDISKFAEKDNIVLGEGGITLSGGQRARISLARAVYKDADLYLLDSPFGYLDVLTEKEIFESCVCKLMANKTRILVTSKMEHLKKADKILILHEGSSYFYGTFSELQNLRPDFSSKLMGFDSFDQFSAERRNSILTETLRRFSLEGDAAVSRNETKKQSFKQTGEIGEKRKNSILNPINSIRKFSVVQKTPLPMNGIDEEDSEEPVERRLSLVPDSEQGEAILPRSNVFNTGPTFQGRRRQSVLNLMTHSVNQGQNIHRKTAASTRKMSLAPQANLTEMDIYSRRLSQESSLEISEEINEEYLKECFCDDVENIPAVTTWNTYLRYLAVNKSLSLVLIWCLVIFLAEVAISLAVLLLLDKSPRYSKGNGTASGNGSSAVIITSTSSYYLFYIYVGVADTLLALGFFRGLPLVHTLITVSKILHHRMLHSVLRAPMSTLNMLKAGGILNRFSKDIAILDDLLPLTIFDFVQLLLIVIGAVAVVSVLQPYIFLATVPVIAAFVILRGYFLHTSQQLKQLESEGRSPIFTHLVTSLKGLWTLRAFGRQPYFETLFHKALNLHTANWFLYLSTLRWFQMRIEMIFVVFFIAVTFISILTTGEGEGTVGIILTLAMNIMGTLQWAVNSSIDVDSLMRSVSRVFKFIDMPTEEGRSTKSIKPSKDCQLSKVMIFENLHVKKDDIWPSGGQMTVKDLTARYIDSGNAILENISFSISPGQRVGLLGRTGAGKSTLLSAFLRLLNTEGDIQIDGVSWDSITLQQWRKAFGVIPQKVFIFSGTFRKNLDPYEQWSDQEIWKVADEVGLRSVIEQFPGKLDFVLVDGGYVLSHGHKQLMCLARSVLSKAKILLLDEPSAHLDPITYQIIRRTLKQAFADCTVILCEHRIEAMLECQRFLVIEENKVRQYDSIQKLLSEKSLFRQAISPSDRMKLFPRRNSSKHKSRSPITALKEETEEEVQETRL.

Over 1-77 (MQRSPLEKAS…KLINALRRCF (77 aa)) the chain is Cytoplasmic. Residues 78–98 (FWRFMFYGILLYLGEVTKAVQ) form a helical membrane-spanning segment. The 285-residue stretch at 81–365 (FMFYGILLYL…WAVQTWYDSL (285 aa)) folds into the ABC transmembrane type-1 1 domain. Over 99 to 122 (PLLLGRIIASYDPDNKVERSIAIY) the chain is Extracellular. A helical membrane pass occupies residues 123 to 146 (LGIGLCLLFIVRTLLLHPAIFGLH). Over 147–195 (HIGMQMRIAMFSLIYKKILKLSSRVLDKISIGQLVSLLSNNLNKFDEGL) the chain is Cytoplasmic. A helical transmembrane segment spans residues 196–216 (ALAHFVWIAPLQVTLLMGLLW). Topologically, residues 217-222 (ELLQAS) are extracellular. Residues 223–243 (AFCGLGFLIVLALVQAGLGRM) form a helical membrane-spanning segment. At 244-298 (MMKYRDQRAGKINERLVITSEMIENIQSVKAYCWEEAMEKMIENLRQTELKLTRK) the chain is on the cytoplasmic side. Residues 299-319 (AAYVRYFNSSAFFFSGFFVVF) traverse the membrane as a helical segment. The Extracellular segment spans residues 320 to 339 (LSVLPYALIKGIILRKIFTT). A helical membrane pass occupies residues 340 to 358 (ISFCIVLRMAVTRQFPWAV). Residues 359-859 (QTWYDSLGAI…YLRYLAVNKS (501 aa)) lie on the Cytoplasmic side of the membrane. Residues Trp401, 458-465 (GSTGAGKT), and Gln493 contribute to the ATP site. Positions 423–646 (NGDNSLFFSN…RPDFSSKLMG (224 aa)) constitute an ABC transporter 1 domain. Cys524 carries the S-palmitoyl cysteine lipid modification. Ser549 and Ser660 each carry phosphoserine. Positions 654 to 832 (SAERRNSILT…EEINEEYLKE (179 aa)) are disordered R region. Ser670 is subject to Phosphoserine; by PKA. At Ser686 the chain carries Phosphoserine. Lys688 participates in a covalent cross-link: Glycyl lysine isopeptide (Lys-Gly) (interchain with G-Cter in ubiquitin). Phosphoserine is present on residues Ser700 and Ser712. Position 717 is a phosphothreonine (Thr717). Residues Ser738, Ser769, Ser791, Ser796, and Ser814 each carry the phosphoserine modification. Residues 860–880 (LSLVLIWCLVIFLAEVAISLA) form a helical membrane-spanning segment. The ABC transmembrane type-1 2 domain occupies 860–1156 (LSLVLIWCLV…AVNSSIDVDS (297 aa)). Residues 881–919 (VLLLLDKSPRYSKGNGTASGNGSSAVIITSTSSYYLFYI) lie on the Extracellular side of the membrane. Residues Asn895 and Asn901 are each glycosylated (N-linked (GlcNAc...) asparagine). The chain crosses the membrane as a discontinuously helical span at residues 920–940 (YVGVADTLLALGFFRGLPLVH). Over 941 to 991 (TLITVSKILHHRMLHSVLRAPMSTLNMLKAGGILNRFSKDIAILDDLLPLT) the chain is Cytoplasmic. A helical membrane pass occupies residues 992–1012 (IFDFVQLLLIVIGAVAVVSVL). Residues 1013-1014 (QP) lie on the Extracellular side of the membrane. A helical transmembrane segment spans residues 1015 to 1035 (YIFLATVPVIAAFVILRGYFL). Topologically, residues 1036–1096 (HTSQQLKQLE…TANWFLYLST (61 aa)) are cytoplasmic. Residues 1097–1117 (LRWFQMRIEMIFVVFFIAVTF) form a helical membrane-spanning segment. At 1118-1131 (ISILTTGEGEGTVG) the chain is on the extracellular side. A helical transmembrane segment spans residues 1132 to 1152 (IILTLAMNIMGTLQWAVNSSI). Residues 1153-1482 (DVDSLMRSVS…TEEEVQETRL (330 aa)) are Cytoplasmic-facing. The ABC transporter 2 domain occupies 1212 to 1445 (MTVKDLTARY…KSLFRQAISP (234 aa)). Residues Tyr1221 and 1246–1253 (GRTGAGKS) each bind ATP. Residues 1388-1482 (RTLKQAFADC…TEEEVQETRL (95 aa)) form an interaction with GORASP2 region. Cys1397 is lipidated: S-palmitoyl cysteine. Residues Ser1446 and Ser1458 each carry the phosphoserine modification. The segment at 1450–1482 (KLFPRRNSSKHKSRSPITALKEETEEEVQETRL) is disordered. Basic residues predominate over residues 1451–1463 (LFPRRNSSKHKSR). A compositionally biased stretch (acidic residues) spans 1472-1482 (ETEEEVQETRL). Residues 1480 to 1482 (TRL) carry the PDZ-binding motif.

Belongs to the ABC transporter superfamily. ABCC family. CFTR transporter (TC 3.A.1.202) subfamily. In terms of assembly, monomer; does not require oligomerization for channel activity. May form oligomers in the membrane. Interacts with SLC26A3, SLC26A6 and NHERF1. Interacts with SHANK2. Interacts with MYO6. Interacts (via C-terminus) with GOPC (via PDZ domain); this promotes CFTR internalization and thereby decreases channel activity. Interacts with SLC4A7 through NHERF1. Found in a complex with MYO5B and RAB11A. Interacts with ANO1. Interacts with SLC26A8. Interacts with AHCYL1; the interaction increases CFTR activity. Interacts with CSE1L. The core-glycosylated form interacts with GORASP2 (via PDZ GRASP-type 1 domain) in respone to ER stress. Interacts with MARCHF2; the interaction leads to CFTR ubiqtuitination and degradation. Interacts with ADGRG2. Post-translationally, N-glycosylated. Phosphorylated; cAMP treatment promotes phosphorylation and activates the channel. Dephosphorylation decreases the ATPase activity (in vitro). Phosphorylation at PKA sites activates the channel. Phosphorylation at PKC sites enhances the response to phosphorylation by PKA. Phosphorylated by AMPK; this inhibits channel activity. In terms of processing, ubiquitinated, leading to its degradation in the lysosome. Deubiquitination by USP10 in early endosomes enhances its endocytic recycling to the cell membrane. Ubiquitinated by RNF185 during ER stress. Ubiquitinated by MARCHF2.

It localises to the apical cell membrane. The protein localises to the early endosome membrane. Its subcellular location is the cell membrane. The protein resides in the recycling endosome membrane. It is found in the endoplasmic reticulum membrane. It localises to the nucleus. The catalysed reaction is ATP + H2O + closed Cl(-) channel = ADP + phosphate + open Cl(-) channel.. It catalyses the reaction chloride(in) = chloride(out). The enzyme catalyses hydrogencarbonate(in) = hydrogencarbonate(out). It carries out the reaction ATP + H2O = ADP + phosphate + H(+). Epithelial ion channel that plays an important role in the regulation of epithelial ion and water transport and fluid homeostasis. Mediates the transport of chloride ions across the cell membrane. Possesses an intrinsic ATPase activity and utilizes ATP to gate its channel; the passive flow of anions through the channel is gated by cycles of ATP binding and hydrolysis by the ATP-binding domains. The ion channel is also permeable to HCO(3)(-); selectivity depends on the extracellular chloride concentration. Exerts its function also by modulating the activity of other ion channels and transporters. Contributes to the regulation of the pH and the ion content of the epithelial fluid layer. Modulates the activity of the epithelial sodium channel (ENaC) complex, in part by regulating the cell surface expression of the ENaC complex. May regulate bicarbonate secretion and salvage in epithelial cells by regulating the transporter SLC4A7. Can inhibit the chloride channel activity of ANO1. Plays a role in the chloride and bicarbonate homeostasis during sperm epididymal maturation and capacitation. In Otolemur garnettii (Small-eared galago), this protein is Cystic fibrosis transmembrane conductance regulator.